Consider the following 376-residue polypeptide: uncharacterized protein (376 aa).

A helical transmembrane segment spans residues Y24 to C44. H251 provides a ligand contact to Zn(2+).

This sequence belongs to the peptidase M23B family. Zn(2+) serves as cofactor.

Its subcellular location is the cell membrane. This is an uncharacterized protein from Buchnera aphidicola subsp. Baizongia pistaciae (strain Bp).